The chain runs to 398 residues: Chalcone synthase 1 (398 aa).

Cys-167 is a catalytic residue.

This sequence belongs to the thiolase-like superfamily. Chalcone/stilbene synthases family.

It catalyses the reaction (E)-4-coumaroyl-CoA + 3 malonyl-CoA + 3 H(+) = 2',4,4',6'-tetrahydroxychalcone + 3 CO2 + 4 CoA. The protein operates within secondary metabolite biosynthesis; flavonoid biosynthesis. The primary product of this enzyme is 4,2',4',6'-tetrahydroxychalcone (also termed naringenin-chalcone or chalcone) which can under specific conditions spontaneously isomerize into naringenin. The sequence is that of Chalcone synthase 1 (CHS1) from Gerbera hybrida (Daisy).